The primary structure comprises 189 residues: Interferon alpha-H (189 aa).

The signal sequence occupies residues 1-23 (MAPAWSFLLALLLLSCNAICSLG). 2 cysteine pairs are disulfide-bonded: C24–C122 and C52–C162.

It belongs to the alpha/beta interferon family.

It is found in the secreted. Functionally, produced by macrophages, IFN-alpha have antiviral activities. Interferon stimulates the production of two enzymes: a protein kinase and an oligoadenylate synthetase. This is Interferon alpha-H (IFNAH) from Bos taurus (Bovine).